The chain runs to 236 residues: MDLQRFNFLIMTTQGRVATMSFMSLDHAQKVDLAKTGLFFHNNLIKCIGCRATMDRVDARRVKRHTYSDTCVSAINALVANESLRKRSFASFKWARRQFGSRAREVDMLSRRGFYCVGKRLRCAGCKVVTTCVSVDGAQRAHAADCAFRRVFDVDLDACALANVVRVDLPPPRLEPRPSAPFDAAVSECKVCFVNEKSVCFLPCRHLVVCAECSPRCKRCCVCNGKIASRLSTIPQ.

The stretch at R85–R150 is one BIR repeat. Positions 123, 126, 142, and 146 each coordinate Zn(2+). An RING-type zinc finger spans residues C189 to C223.

In Orgyia pseudotsugata multicapsid polyhedrosis virus (OpMNPV), this protein is Probable apoptosis inhibitor 2 (IAP2).